The primary structure comprises 248 residues: Probable phosphatase VF_A0065 (248 aa).

Residues His-8, His-10, His-16, His-41, Glu-74, His-102, His-132, Asp-194, and His-196 each contribute to the Zn(2+) site.

It belongs to the PHP family. It depends on Zn(2+) as a cofactor.

The chain is Probable phosphatase VF_A0065 from Aliivibrio fischeri (strain ATCC 700601 / ES114) (Vibrio fischeri).